We begin with the raw amino-acid sequence, 357 residues long: Tetraacyldisaccharide 4'-kinase (357 aa).

Residue Thr54–Thr61 participates in ATP binding.

It belongs to the LpxK family.

The catalysed reaction is a lipid A disaccharide + ATP = a lipid IVA + ADP + H(+). The protein operates within glycolipid biosynthesis; lipid IV(A) biosynthesis; lipid IV(A) from (3R)-3-hydroxytetradecanoyl-[acyl-carrier-protein] and UDP-N-acetyl-alpha-D-glucosamine: step 6/6. Functionally, transfers the gamma-phosphate of ATP to the 4'-position of a tetraacyldisaccharide 1-phosphate intermediate (termed DS-1-P) to form tetraacyldisaccharide 1,4'-bis-phosphate (lipid IVA). This Rhizobium leguminosarum bv. trifolii (strain WSM2304) protein is Tetraacyldisaccharide 4'-kinase.